The following is a 177-amino-acid chain: Ribulose bisphosphate carboxylase small subunit, chloroplastic 3 (177 aa).

Residues 1-56 (MASSMMASTAAAVARAGPAQSSMVPFNACRSSVPFPATRKANNNLSTLPGNGGRVS) constitute a chloroplast transit peptide.

It belongs to the RuBisCO small chain family. As to quaternary structure, heterohexadecamer of 8 large and 8 small subunits.

It is found in the plastid. It localises to the chloroplast. Functionally, ruBisCO catalyzes two reactions: the carboxylation of D-ribulose 1,5-bisphosphate, the primary event in carbon dioxide fixation, as well as the oxidative fragmentation of the pentose substrate. Both reactions occur simultaneously and in competition at the same active site. Although the small subunit is not catalytic it is essential for maximal activity. The sequence is that of Ribulose bisphosphate carboxylase small subunit, chloroplastic 3 from Lemna gibba (Swollen duckweed).